The primary structure comprises 148 residues: U5-hexatoxin-Hi1a (148 aa).

Positions 1–21 (MNFSVVAVALVVVLTVHFTDG) are cleaved as a signal peptide. A propeptide spanning residues 22–38 (QETSSSLPSPPSPLPGR) is cleaved from the precursor. The segment at 125-148 (TPSTTVTTPTPTTETPTTETPSTP) is disordered.

Contains 2 disulfide bonds. In terms of tissue distribution, expressed by the venom gland.

The protein resides in the secreted. Its function is as follows. Probable ion channel inhibitor. This Hadronyche infensa (Fraser island funnel-web spider) protein is U5-hexatoxin-Hi1a.